A 118-amino-acid chain; its full sequence is Small ribosomal subunit protein uS13 (118 aa).

Residues 91 to 118 form a disordered region; sequence HRRSLPLRGQRTKNNARTRKGPKKPIKR.

This sequence belongs to the universal ribosomal protein uS13 family. As to quaternary structure, part of the 30S ribosomal subunit. Forms a loose heterodimer with protein S19. Forms two bridges to the 50S subunit in the 70S ribosome.

In terms of biological role, located at the top of the head of the 30S subunit, it contacts several helices of the 16S rRNA. In the 70S ribosome it contacts the 23S rRNA (bridge B1a) and protein L5 of the 50S subunit (bridge B1b), connecting the 2 subunits; these bridges are implicated in subunit movement. Contacts the tRNAs in the A and P-sites. The protein is Small ribosomal subunit protein uS13 of Hydrogenovibrio crunogenus (strain DSM 25203 / XCL-2) (Thiomicrospira crunogena).